The following is a 711-amino-acid chain: Toxin RTX-III translocation ATP-binding protein (711 aa).

The 129-residue stretch at 1–129 (MESQMPFNEK…EIFQGGMILI (129 aa)) folds into the Peptidase C39 domain. His87 is an active-site residue. Residues 158 to 440 (FVETIIVSIF…LAQLWQDFQQ (283 aa)) form the ABC transmembrane type-1 domain. Transmembrane regions (helical) follow at residues 162–182 (IIVS…FQVV), 195–215 (LNVI…LSGL), 273–293 (ALTS…MWYY), 299–319 (IVIL…SPIL), and 392–412 (VMII…LSIG). The 236-residue stretch at 472-707 (IAFKHIRFRY…ENGLYYYLNQ (236 aa)) folds into the ABC transporter domain. ATP is bound at residue 506–513 (GRSGSGKS).

It belongs to the ABC transporter superfamily. Protein-1 exporter (TC 3.A.1.109) family. As to quaternary structure, homodimer.

Its subcellular location is the cell membrane. In terms of biological role, involved in the transport of the toxin RTX-III. This chain is Toxin RTX-III translocation ATP-binding protein (apxIIIB), found in Actinobacillus pleuropneumoniae (Haemophilus pleuropneumoniae).